Consider the following 335-residue polypeptide: Probable cytosolic iron-sulfur protein assembly protein Ciao1 (335 aa).

WD repeat units follow at residues 12–51 (GHKG…WSTK), 57–96 (GHKR…FECN), 101–140 (GHEN…EFEC), 146–185 (SHTQ…NDWD), 192–231 (SHTS…NSAG), 250–289 (QHSR…KPDE), and 301–335 (AHDQ…KVTE).

It belongs to the WD repeat CIA1 family.

Its function is as follows. Essential component of the cytosolic iron-sulfur (Fe/S) protein assembly machinery. Required for the maturation of extramitochondrial Fe/S proteins. The polypeptide is Probable cytosolic iron-sulfur protein assembly protein Ciao1 (Drosophila yakuba (Fruit fly)).